The sequence spans 341 residues: Glyceraldehyde-3-phosphate dehydrogenase 2 (341 aa).

NAD(+) contacts are provided by residues 12–13 (RI), Arg-78, and Thr-120. Residues 152-154 (SCT) and Thr-183 contribute to the D-glyceraldehyde 3-phosphate site. Cys-153 functions as the Nucleophile in the catalytic mechanism. Asn-184 contributes to the NAD(+) binding site. Residues Arg-198, 211–212 (TG), and Arg-234 each bind D-glyceraldehyde 3-phosphate. Asn-313 contacts NAD(+).

This sequence belongs to the glyceraldehyde-3-phosphate dehydrogenase family. In terms of assembly, homotetramer.

Its subcellular location is the cytoplasm. The catalysed reaction is D-glyceraldehyde 3-phosphate + phosphate + NAD(+) = (2R)-3-phospho-glyceroyl phosphate + NADH + H(+). The protein operates within carbohydrate degradation; glycolysis; pyruvate from D-glyceraldehyde 3-phosphate: step 1/5. Its function is as follows. Catalyzes the oxidative phosphorylation of glyceraldehyde 3-phosphate (G3P) to 1,3-bisphosphoglycerate (BPG) using the cofactor NAD. The first reaction step involves the formation of a hemiacetal intermediate between G3P and a cysteine residue, and this hemiacetal intermediate is then oxidized to a thioester, with concomitant reduction of NAD to NADH. The reduced NADH is then exchanged with the second NAD, and the thioester is attacked by a nucleophilic inorganic phosphate to produce BPG. This is Glyceraldehyde-3-phosphate dehydrogenase 2 (gapA2) from Staphylococcus aureus (strain MRSA252).